Here is a 699-residue protein sequence, read N- to C-terminus: SPS-sensor serine protease component SSY5 (699 aa).

Disordered stretches follow at residues 1-113 and 129-158; these read MVRF…LQGF and VKEEESQDTQNTLDVSSSTSSTLATSGNAR. A propeptide spanning residues 1-381 is cleaved from the precursor; it reads MVRFFGLNKK…YCVKDYIKKA (381 aa). Residues 24–38 are compositionally biased toward polar residues; it reads NEQNAAETSSSNVSG. Basic and acidic residues predominate over residues 39–51; the sequence is NEERIDPNSHDAN. Residues 52 to 78 are compositionally biased toward low complexity; that stretch reads PENANNDDASTTFGSSIQSSSIFSRGR. Positions 83–93 are enriched in polar residues; that stretch reads TGASSSMATSE. 2 stretches are compositionally biased toward low complexity: residues 97–109 and 144–154; these read HSSGHSGSKNSKN and SSSTSSTLATS. The interval 459–699 is serine protease; sequence FAITCAHVVL…QWDIDPQLDG (241 aa). Active-site charge relay system residues include histidine 465, aspartate 545, and serine 640.

This sequence belongs to the peptidase S64 family. Component of the plasma membrane SPS (SSY1-PTR3-SSY5) amino acid sensor complex. The propeptide is autoproteolytically cleaved from the catalytic domain but remains associated, forming an inactive protease complex. This processing occurs even in the absence of signaling.

The protein resides in the cell membrane. Functionally, protease component of the SPS-sensor system, which regulates the expression of several amino acid-metabolizing enzymes and amino acid- and peptide-permeases in response to extracellular amino acid levels by controlling the activity of two transcription factors, STP1 and STP2. Catalyzes the activation of these transcription factors, which are synthesized as latent cytoplasmic precursors, by proteolytic removal of an N-terminal inhibitory domain containing cytoplasmic retention motifs. SSY5 binds as an inactive protease complex to STP1. In response to extracellular amino acids and dependent on the other SPS-sensor components, the inhibitory propeptide is induced to dissociate, and thereby enables the catalytic domain to process STP1. In Saccharomyces cerevisiae (strain YJM789) (Baker's yeast), this protein is SPS-sensor serine protease component SSY5 (SSY5).